The chain runs to 119 residues: Large ribosomal subunit protein uL18 (119 aa).

Positions M1–K20 are disordered. Residues R9–K20 are compositionally biased toward basic residues.

It belongs to the universal ribosomal protein uL18 family. Part of the 50S ribosomal subunit; part of the 5S rRNA/L5/L18/L25 subcomplex. Contacts the 5S and 23S rRNAs.

In terms of biological role, this is one of the proteins that bind and probably mediate the attachment of the 5S RNA into the large ribosomal subunit, where it forms part of the central protuberance. This chain is Large ribosomal subunit protein uL18, found in Chlorobium phaeobacteroides (strain DSM 266 / SMG 266 / 2430).